We begin with the raw amino-acid sequence, 494 residues long: Aspartyl/glutamyl-tRNA(Asn/Gln) amidotransferase subunit B (494 aa).

Belongs to the GatB/GatE family. GatB subfamily. In terms of assembly, heterotrimer of A, B and C subunits.

The catalysed reaction is L-glutamyl-tRNA(Gln) + L-glutamine + ATP + H2O = L-glutaminyl-tRNA(Gln) + L-glutamate + ADP + phosphate + H(+). It carries out the reaction L-aspartyl-tRNA(Asn) + L-glutamine + ATP + H2O = L-asparaginyl-tRNA(Asn) + L-glutamate + ADP + phosphate + 2 H(+). Its function is as follows. Allows the formation of correctly charged Asn-tRNA(Asn) or Gln-tRNA(Gln) through the transamidation of misacylated Asp-tRNA(Asn) or Glu-tRNA(Gln) in organisms which lack either or both of asparaginyl-tRNA or glutaminyl-tRNA synthetases. The reaction takes place in the presence of glutamine and ATP through an activated phospho-Asp-tRNA(Asn) or phospho-Glu-tRNA(Gln). This Rhodopseudomonas palustris (strain BisB5) protein is Aspartyl/glutamyl-tRNA(Asn/Gln) amidotransferase subunit B.